Consider the following 260-residue polypeptide: Sodium channel modifier 1 (260 aa).

The Bipartite nuclear localization signal motif lies at 4–20 (KRDGDDSSQLNVLKKRR). A Matrin-type zinc finger spans residues 42–74 (YACTVCHHRPVFNTIDMLSVHRTGKKHLGGLQR). The segment at 143–260 (RNVYDPHSGP…EEEPPALPPS (118 aa)) is disordered. A compositionally biased stretch (polar residues) spans 166-187 (PGPSQPHTSLHSPPTGPCSSPT). Over residues 202-221 (KGEEKFRKEIADPERERNME) the composition is skewed to basic and acidic residues. Acidic residues predominate over residues 245–254 (VEFDSDEEEP).

In terms of assembly, component of the minor spliceosome, which splices U12-type introns.

The protein localises to the nucleus. Its subcellular location is the nucleoplasm. The protein resides in the nucleus speckle. Its function is as follows. As a component of the minor spliceosome, involved in the splicing of U12-type introns in pre-mRNAs. The polypeptide is Sodium channel modifier 1 (scnm1) (Xenopus laevis (African clawed frog)).